Here is a 193-residue protein sequence, read N- to C-terminus: MRLFGLILAGGEGRRMGGTDKASLTLGGRLLVTWVAERLGPQVEELAISANGDPARFAGLGLPVLRDEHPQGPLSGVLAGLRWAAAAGADALVTAPVDTPFVPGDLAPRLWLAGEGACAVAEAGGRVHPACGLWPVAVAEDLAAWLAAGEARVMGFAARHGAARAGFPDENAFLNLNAPEDLARAESLLRKDA.

Residues L8–G10, K21, D67, and D98 contribute to the GTP site. D98 is a Mg(2+) binding site.

It belongs to the MobA family. Monomer. Mg(2+) serves as cofactor.

The protein resides in the cytoplasm. It carries out the reaction Mo-molybdopterin + GTP + H(+) = Mo-molybdopterin guanine dinucleotide + diphosphate. Functionally, transfers a GMP moiety from GTP to Mo-molybdopterin (Mo-MPT) cofactor (Moco or molybdenum cofactor) to form Mo-molybdopterin guanine dinucleotide (Mo-MGD) cofactor. This Cereibacter sphaeroides (strain ATCC 17029 / ATH 2.4.9) (Rhodobacter sphaeroides) protein is Molybdenum cofactor guanylyltransferase.